Reading from the N-terminus, the 89-residue chain is Small ribosomal subunit protein uS14 (89 aa).

It belongs to the universal ribosomal protein uS14 family. In terms of assembly, part of the 30S ribosomal subunit. Contacts proteins S3 and S10.

Binds 16S rRNA, required for the assembly of 30S particles and may also be responsible for determining the conformation of the 16S rRNA at the A site. The chain is Small ribosomal subunit protein uS14 from Shouchella clausii (strain KSM-K16) (Alkalihalobacillus clausii).